The sequence spans 111 residues: Ribonuclease P protein component (111 aa).

The protein belongs to the RnpA family. Consists of a catalytic RNA component (M1 or rnpB) and a protein subunit.

It carries out the reaction Endonucleolytic cleavage of RNA, removing 5'-extranucleotides from tRNA precursor.. In terms of biological role, RNaseP catalyzes the removal of the 5'-leader sequence from pre-tRNA to produce the mature 5'-terminus. It can also cleave other RNA substrates such as 4.5S RNA. The protein component plays an auxiliary but essential role in vivo by binding to the 5'-leader sequence and broadening the substrate specificity of the ribozyme. This chain is Ribonuclease P protein component, found in Clostridium botulinum (strain 657 / Type Ba4).